We begin with the raw amino-acid sequence, 185 residues long: Ribosome-recycling factor (185 aa).

Belongs to the RRF family.

It is found in the cytoplasm. In terms of biological role, responsible for the release of ribosomes from messenger RNA at the termination of protein biosynthesis. May increase the efficiency of translation by recycling ribosomes from one round of translation to another. The chain is Ribosome-recycling factor from Nitrosomonas eutropha (strain DSM 101675 / C91 / Nm57).